We begin with the raw amino-acid sequence, 340 residues long: Ribonucleoside-diphosphate reductase subunit beta (340 aa).

Positions 88 and 122 each coordinate Fe cation. Tyr-126 is a catalytic residue. His-216 lines the Fe cation pocket.

It belongs to the ribonucleoside diphosphate reductase small chain family. As to quaternary structure, tetramer of two alpha and two beta subunits. Fe cation serves as cofactor.

The catalysed reaction is a 2'-deoxyribonucleoside 5'-diphosphate + [thioredoxin]-disulfide + H2O = a ribonucleoside 5'-diphosphate + [thioredoxin]-dithiol. Its function is as follows. Provides the precursors necessary for DNA synthesis. Catalyzes the biosynthesis of deoxyribonucleotides from the corresponding ribonucleotides. This is Ribonucleoside-diphosphate reductase subunit beta (nrdF) from Mycoplasma genitalium (strain ATCC 33530 / DSM 19775 / NCTC 10195 / G37) (Mycoplasmoides genitalium).